Here is a 122-residue protein sequence, read N- to C-terminus: uncharacterized protein (122 aa).

The N-terminal stretch at 1-20 is a signal peptide; sequence MGFHFCIWIIFLLPPPCKKC.

Its subcellular location is the secreted. This is an uncharacterized protein from Homo sapiens (Human).